We begin with the raw amino-acid sequence, 346 residues long: Thioredoxin domain-containing protein R362 (346 aa).

Residues 212 to 345 (LTNLSNTEAN…IVKFIDETMS (134 aa)) form the Thioredoxin domain.

It is found in the virion. This chain is Thioredoxin domain-containing protein R362, found in Acanthamoeba polyphaga (Amoeba).